Here is a 208-residue protein sequence, read N- to C-terminus: Nascent polypeptide-associated complex subunit alpha (208 aa).

A compositionally biased stretch (basic and acidic residues) spans 1–19 (MSSSRIEELPDDDVPKTTV). 2 disordered regions span residues 1-50 (MSSS…HSRN) and 120-166 (QLAA…VFDA). Residues 21-34 (DAADSSESEVEGAE) show a composition bias toward acidic residues. The region spanning 48–113 (SRNEKKARKA…AKIEDLNSQA (66 aa)) is the NAC-A/B domain. Over residues 120-131 (QLAAAEAAGSNE) the composition is skewed to low complexity. The span at 132–154 (HAGHDHASHDHGKGKAVESADKK) shows a compositional bias: basic and acidic residues. Over residues 155–164 (DEEEDDEEVF) the composition is skewed to acidic residues. Residues 169–208 (LEAKDIELVMAQASVSRNKAIKALKENDNDIVNSIMALSV) enclose the UBA domain.

The protein belongs to the NAC-alpha family. As to quaternary structure, part of the nascent polypeptide-associated complex (NAC), consisting of EGD2 and EGD1. NAC associates with ribosomes via EGD1.

It localises to the cytoplasm. The protein resides in the nucleus. In terms of biological role, component of the nascent polypeptide-associated complex (NAC), a dynamic component of the ribosomal exit tunnel, protecting the emerging polypeptides from interaction with other cytoplasmic proteins to ensure appropriate nascent protein targeting. The NAC complex also promotes mitochondrial protein import by enhancing productive ribosome interactions with the outer mitochondrial membrane and blocks the inappropriate interaction of ribosomes translating non-secretory nascent polypeptides with translocation sites in the membrane of the endoplasmic reticulum. EGD2 may also be involved in transcription regulation. In Ajellomyces capsulatus (strain NAm1 / WU24) (Darling's disease fungus), this protein is Nascent polypeptide-associated complex subunit alpha (EGD2).